The sequence spans 706 residues: Protein MAM3 (706 aa).

The Vacuolar segment spans residues 1-16 (MSFLPLRSRSRSGAPH). Residues 17-37 (WVYIILYHIFTIPKIYSLPLL) traverse the membrane as a helical segment. Residues 38-65 (SGSHVLNSRDVADSGHSVGDEASVTTYY) lie on the Cytoplasmic side of the membrane. The CNNM transmembrane domain occupies 57–240 (DEASVTTYYI…MGVERLTKDE (184 aa)). Residues 66–86 (IISIILVLLGGVFAGLTLGLM) form a helical membrane-spanning segment. The Vacuolar portion of the chain corresponds to 87–120 (GQDEVYLKVISTSGSNSEKKLAKRVLDLISRGKH). The helical transmembrane segment at 121–141 (WVLVTLLLSNVITNETLPIVL) threads the bilayer. Residues 142–145 (DRCL) are Cytoplasmic-facing. A helical membrane pass occupies residues 146–166 (GGGWQAVVSSTILIVIFGEII). Topologically, residues 167–177 (PQSVCVKYGLQ) are vacuolar. Residues 178–198 (VGAFFCPFVLVLMYLMYPVAY) traverse the membrane as a helical segment. The Cytoplasmic segment spans residues 199-706 (PIATLLDYML…ANGSSSTIKR (508 aa)). 2 consecutive CBS domains span residues 259 to 320 (MTPI…DCLP) and 321 to 386 (ISHF…IVDE). Disordered stretches follow at residues 421–495 (SHKE…ASNP), 515–540 (ITTHTPHSSKEPSPAPHSNDKSLSAE), and 557–597 (LHTQ…ENQN). The span at 433–445 (ESSPLLSPSNSNH) shows a compositional bias: low complexity. 2 positions are modified to phosphoserine: Ser-439 and Ser-447. Over residues 472–495 (AVLSPTPQVTEHGTIIPSNLASNP) the composition is skewed to polar residues. Ser-527 carries the post-translational modification Phosphoserine. Low complexity predominate over residues 566–575 (TQVTTSTKTT). The span at 576-597 (RNSPDSISIPNSGANHGNENQN) shows a compositional bias: polar residues. Ser-603 carries the post-translational modification Phosphoserine. Position 604 is a phosphotyrosine (Tyr-604). The residue at position 607 (Thr-607) is a Phosphothreonine. Phosphoserine is present on Ser-614. Positions 626–706 (IGPAKDWDES…ANGSSSTIKR (81 aa)) are disordered. Over residues 630–639 (KDWDESKSEY) the composition is skewed to basic and acidic residues. Low complexity predominate over residues 658 to 680 (SSSNASLFSSIKNKFKNENANNN). The segment covering 681–706 (DRSNFTDSLSRTSNYDANGSSSTIKR) has biased composition (polar residues).

This sequence belongs to the ACDP family.

The protein localises to the vacuole membrane. Its function is as follows. Involved in metal homeostasis and more specially in manganese sensitivity. In Saccharomyces cerevisiae (strain ATCC 204508 / S288c) (Baker's yeast), this protein is Protein MAM3 (MAM3).